The primary structure comprises 152 residues: Siroheme decarboxylase beta subunit (152 aa).

The protein belongs to the Ahb/Nir family. Forms a heterodimer composed of AhbA and AhbB.

It carries out the reaction siroheme + 2 H(+) = 12,18-didecarboxysiroheme + 2 CO2. It participates in porphyrin-containing compound metabolism; protoheme biosynthesis. Binds heme b. The redox state of the heme b modulates the activity of the enzyme. Activity is stimulated by sodium dithionite. Functionally, involved in siroheme-dependent heme b biosynthesis. Catalyzes the decarboxylation of siroheme into didecarboxysiroheme. This chain is Siroheme decarboxylase beta subunit, found in Methanosarcina barkeri (strain Fusaro / DSM 804).